A 421-amino-acid polypeptide reads, in one-letter code: UDP-N-acetylglucosamine 1-carboxyvinyltransferase (421 aa).

Lysine 22–asparagine 23 is a phosphoenolpyruvate binding site. Arginine 93 lines the UDP-N-acetyl-alpha-D-glucosamine pocket. Residue cysteine 117 is the Proton donor of the active site. 2-(S-cysteinyl)pyruvic acid O-phosphothioketal is present on cysteine 117. UDP-N-acetyl-alpha-D-glucosamine contacts are provided by residues arginine 122 to leucine 126, aspartate 308, and valine 330.

Belongs to the EPSP synthase family. MurA subfamily.

It is found in the cytoplasm. It carries out the reaction phosphoenolpyruvate + UDP-N-acetyl-alpha-D-glucosamine = UDP-N-acetyl-3-O-(1-carboxyvinyl)-alpha-D-glucosamine + phosphate. Its pathway is cell wall biogenesis; peptidoglycan biosynthesis. Its function is as follows. Cell wall formation. Adds enolpyruvyl to UDP-N-acetylglucosamine. The protein is UDP-N-acetylglucosamine 1-carboxyvinyltransferase of Pseudomonas paraeruginosa (strain DSM 24068 / PA7) (Pseudomonas aeruginosa (strain PA7)).